Here is a 67-residue protein sequence, read N- to C-terminus: Conotoxin Cl6.6a (67 aa).

Positions 1 to 24 (MKLTCVLIAAVLLLAVCQLDSADA) are cleaved as a signal peptide. Positions 25 to 37 (TGYMRKNPSLRSP) are excised as a propeptide. 3 disulfide bridges follow: Cys-43–Cys-57, Cys-50–Cys-61, and Cys-56–Cys-65.

Belongs to the conotoxin O1 superfamily. Expressed by the venom duct.

The protein resides in the secreted. This is Conotoxin Cl6.6a from Californiconus californicus (California cone).